A 439-amino-acid polypeptide reads, in one-letter code: Amino-acid acetyltransferase (439 aa).

Residues 289–429 enclose the N-acetyltransferase domain; it reads EDIRIATVQD…DHYNYQRRSK (141 aa).

The protein belongs to the acetyltransferase family. ArgA subfamily.

Its subcellular location is the cytoplasm. The enzyme catalyses L-glutamate + acetyl-CoA = N-acetyl-L-glutamate + CoA + H(+). It participates in amino-acid biosynthesis; L-arginine biosynthesis; N(2)-acetyl-L-ornithine from L-glutamate: step 1/4. This is Amino-acid acetyltransferase from Mannheimia succiniciproducens (strain KCTC 0769BP / MBEL55E).